The following is a 370-amino-acid chain: Ubiquitin carboxyl-terminal hydrolase 12 (370 aa).

A Required for plasma membrane localization of USP12/WDR20 motif is present at residues 1 to 4 (MEIL). In terms of domain architecture, USP spans 39–369 (FGLVNFGNTC…SGYILFYQSR (331 aa)). The Nucleophile role is filled by Cys-48. Basic and acidic residues predominate over residues 146 to 157 (QEKQNGRLRNGD). Residues 146–168 (QEKQNGRLRNGDVDSEDNNSTPD) form a disordered region. Residues Cys-186, Cys-189, Cys-233, and Cys-236 each coordinate Zn(2+). His-317 serves as the catalytic Proton acceptor.

This sequence belongs to the peptidase C19 family. USP12/USP46 subfamily. In terms of assembly, interacts with WDR48. Interacts with WDR20; this interaction promotes translocation of the USP12 complex to the plasma membrane. Component of the USP12-WDR20-WDR48 deubiquitinating complex. Component of the USP12-DMWD-WDR48 deubiquitinating complex. Interacts with PHLPP1. Interacts with RBPJ. Interacts with CBP; this interaction blocks the acetyltransferase activity of CREBBP. Interacts with ITCH; the interaction is more efficient when both USP12 and WDR48/UAF1 are involved and may mediate recruitment of the USP12 deubiquitinating complex to Notch.

The protein resides in the nucleus. Its subcellular location is the cytoplasm. The protein localises to the cell membrane. The catalysed reaction is Thiol-dependent hydrolysis of ester, thioester, amide, peptide and isopeptide bonds formed by the C-terminal Gly of ubiquitin (a 76-residue protein attached to proteins as an intracellular targeting signal).. Its activity is regulated as follows. Activated by interaction with WDR20, WDR48 and DMWD through different allosteric mechanisms. Deubiquitinating enzyme that plays various roles in the regulation of the immune response and inflammation. During TCR engagement and activation, translocates into the cytoplasm and deubiquitinates its substrates LAT and TRAT1 and prevents their lysosome-dependent degradation to stabilize the TCR signaling complex at the plasma membrane. Plays an essential role in the selective LPS-induced macrophage response through the activation of NF-kappa-B pathway. In addition, promotes that antiviral immune response through targeting DNA sensor IFI16 to inhibit its proteasome-dependent degradation. Participates in the interferon signaling pathway and antiviral response independently of its deubiquitinase activity by maintaining nuclear phosphorylated STAT1 levels via inhibition of its CREBBP-mediated acetylation and subsequent dephosphorylation. Plays an intrinsic role in promoting the differentiation, activation and proliferation of CD4(+) T-cell by activating the NF-kappa-B signaling pathway through deubiquitinating and stabilizing B-cell lymphoma/leukemia 10/BCL10. In myeloid-derived suppressor cells promotes the activation of the NF-kappa-B via deubiquitination and stabilization of RELA. Regulates the 'Lys-63'-linked polyubiquitin chains of BAX and thereby modulates the mitochondrial apoptotic process. Negative regulator of NOTCH signaling that specifically deubiquitinates non-activated NOTCH receptors to target them for lysosomal degradation; deubiquitination of NOTCH stimulates its transport form late endosomes to lysosomes. Protects neurons against HTT/huntingtin-induced polyglutamine expansion-dependent neurodegeneration through regulation of autophagic flux. This function is independent of deubiquitinase activity or of other components of the USP12-WDR20-WDR48 deubiquitinating complex. In complex with WDR48, acts as a potential tumor suppressor by positively regulating PHLPP1 stability. The sequence is that of Ubiquitin carboxyl-terminal hydrolase 12 from Rattus norvegicus (Rat).